Consider the following 717-residue polypeptide: Polyribonucleotide nucleotidyltransferase (717 aa).

Positions 488 and 494 each coordinate Mg(2+). Positions 555 to 614 (PRIEVMNIPVDKIREVIGSGGKVIREIVEKTGAKINIEDDGTVKIASSSGKEIEAARKWI) constitute a KH domain. The region spanning 624-692 (GQIYEGTVVK…ERGKVRLSMK (69 aa)) is the S1 motif domain.

This sequence belongs to the polyribonucleotide nucleotidyltransferase family. It depends on Mg(2+) as a cofactor.

It localises to the cytoplasm. It catalyses the reaction RNA(n+1) + phosphate = RNA(n) + a ribonucleoside 5'-diphosphate. In terms of biological role, involved in mRNA degradation. Catalyzes the phosphorolysis of single-stranded polyribonucleotides processively in the 3'- to 5'-direction. This Sinorhizobium fredii (strain NBRC 101917 / NGR234) protein is Polyribonucleotide nucleotidyltransferase.